A 132-amino-acid polypeptide reads, in one-letter code: Small ribosomal subunit protein eS24 (132 aa).

Residues 92–101 (LARHGLYEKK) are compositionally biased toward basic and acidic residues. The disordered stretch occupies residues 92 to 132 (LARHGLYEKKRPTRKQRKERKNRMKKVRGTKKSKVGAAAKK). The segment covering 102 to 132 (RPTRKQRKERKNRMKKVRGTKKSKVGAAAKK) has biased composition (basic residues).

The protein belongs to the eukaryotic ribosomal protein eS24 family.

In Spodoptera frugiperda (Fall armyworm), this protein is Small ribosomal subunit protein eS24 (RpS24).